We begin with the raw amino-acid sequence, 388 residues long: Na(+)/H(+) antiporter NhaA (388 aa).

Helical transmembrane passes span 14–34, 59–79, 95–115, 125–145, 154–174, 179–199, 219–239, 254–274, 292–312, 328–348, and 356–376; these read GGII…MGAT, MLLW…GLEV, VFPV…YLAF, GWAI…ALLG, IFLM…IALF, LSIV…LLNL, VLKS…FIPL, ILHP…NAGV, IIAG…WLAL, IMAV…IASL, and ALIN…AVVG.

The protein belongs to the NhaA Na(+)/H(+) (TC 2.A.33) antiporter family.

It localises to the cell inner membrane. It catalyses the reaction Na(+)(in) + 2 H(+)(out) = Na(+)(out) + 2 H(+)(in). Functionally, na(+)/H(+) antiporter that extrudes sodium in exchange for external protons. In Salmonella arizonae (strain ATCC BAA-731 / CDC346-86 / RSK2980), this protein is Na(+)/H(+) antiporter NhaA.